Reading from the N-terminus, the 276-residue chain is MEQWRYIVTEAMSPAMNMAVDEAILQLHSEGKVPPTVRFYTWDPATLSIGYFQKAIKEINLEEVQNRGLGFVRRATGGRAVLHDQELTYSVIVSEDHPKMPSSVTEAYKIISLGLLHGFQNLGLSAEMVSLASEEEKEKYNSPGSSACFDSPSWYELVVEGKKVAGSAQTRQKGVILQHGSILLDMDVDLLFSLLHFPSERVKQRMIDSFRQKAVTINEVSSRPISLQESIEAFSKGFASGLEVELTPSTLTDEELALAEELVRTRYATDEWNLRR.

Positions 31-246 constitute a BPL/LPL catalytic domain; sequence GKVPPTVRFY…GFASGLEVEL (216 aa). Cysteine 148 functions as the Acyl-thioester intermediate in the catalytic mechanism.

The protein belongs to the octanoyltransferase LipM family. As to quaternary structure, monomer.

It catalyses the reaction octanoyl-[ACP] + L-lysyl-[protein] = N(6)-octanoyl-L-lysyl-[protein] + holo-[ACP] + H(+). The protein operates within protein modification; protein lipoylation via endogenous pathway; protein N(6)-(lipoyl)lysine from octanoyl-[acyl-carrier-protein]. In terms of biological role, catalyzes the transfer of endogenously produced octanoic acid from octanoyl-acyl-carrier-protein onto the lipoyl domain of GcvH, an intermediate carrier during protein lipoylation. The polypeptide is Octanoyltransferase LipM (Brevibacillus brevis (strain 47 / JCM 6285 / NBRC 100599)).